Reading from the N-terminus, the 652-residue chain is Chaperone protein HtpG (652 aa).

The segment at 1–348 (MATDAHKETL…SDDLPLNVSR (348 aa)) is a; substrate-binding. The segment at 349–565 (ELLQHNPLLD…EYDFGMGMQR (217 aa)) is b. Residues 566–652 (LLKAAGHAMP…EAKSNAARGD (87 aa)) are c.

It belongs to the heat shock protein 90 family. Homodimer.

The protein resides in the cytoplasm. In terms of biological role, molecular chaperone. Has ATPase activity. The sequence is that of Chaperone protein HtpG from Alkalilimnicola ehrlichii (strain ATCC BAA-1101 / DSM 17681 / MLHE-1).